The chain runs to 842 residues: Follistatin-related protein 4 (842 aa).

A signal peptide spans 1–22 (MKPGGFWLHLTLLGASLPAALG). Positions 81–135 (KTGEPECQCLEACRPSYVPVCGSDGRFYENHCKLHRAACLLGKRITVIHSKDCFL) constitute a Kazal-like domain. Cystine bridges form between Cys-87-Cys-119, Cys-93-Cys-112, and Cys-101-Cys-133. The EF-hand domain maps to 174–209 (QKRLLVESLFRDLDADGNGHLSSSELAQHVLKKQDL). Ca(2+) contacts are provided by Asp-187, Asp-189, Asn-191, His-193, and Glu-198. 2 Ig-like domains span residues 251-338 (PEDR…LQVN) and 341-426 (PVIR…EDIS). Disulfide bonds link Cys-270/Cys-321 and Cys-362/Cys-413. Asn-318 is a glycosylation site (N-linked (GlcNAc...) asparagine).

It localises to the secreted. The sequence is that of Follistatin-related protein 4 (FSTL4) from Homo sapiens (Human).